The chain runs to 82 residues: Small ribosomal subunit protein uS15 (82 aa).

This sequence belongs to the universal ribosomal protein uS15 family. As to quaternary structure, part of the 30S ribosomal subunit. Forms a bridge to the 50S subunit in the 70S ribosome, contacting the 23S rRNA.

One of the primary rRNA binding proteins, it binds directly to 16S rRNA where it helps nucleate assembly of the platform of the 30S subunit by binding and bridging several RNA helices of the 16S rRNA. Functionally, forms an intersubunit bridge (bridge B4) with the 23S rRNA of the 50S subunit in the ribosome. The sequence is that of Small ribosomal subunit protein uS15 from Pelagibacter ubique (strain HTCC1062).